A 233-amino-acid polypeptide reads, in one-letter code: Protein Thf1 (233 aa).

The stretch at Asp-183–Ala-204 forms a coiled coil. The interval Ala-212–Glu-233 is disordered.

The protein belongs to the THF1 family.

May be involved in photosynthetic membrane biogenesis. This chain is Protein Thf1, found in Nostoc sp. (strain PCC 7120 / SAG 25.82 / UTEX 2576).